A 416-amino-acid polypeptide reads, in one-letter code: Glutamyl-tRNA reductase (416 aa).

Residues 49 to 52, S105, 110 to 112, and Q116 each bind substrate; these read TCNR and ETQ. Residue C50 is the Nucleophile of the active site. 185–190 lines the NADP(+) pocket; that stretch reads GAGEMI.

It belongs to the glutamyl-tRNA reductase family. Homodimer.

The catalysed reaction is (S)-4-amino-5-oxopentanoate + tRNA(Glu) + NADP(+) = L-glutamyl-tRNA(Glu) + NADPH + H(+). It functions in the pathway porphyrin-containing compound metabolism; protoporphyrin-IX biosynthesis; 5-aminolevulinate from L-glutamyl-tRNA(Glu): step 1/2. In terms of biological role, catalyzes the NADPH-dependent reduction of glutamyl-tRNA(Glu) to glutamate 1-semialdehyde (GSA). The chain is Glutamyl-tRNA reductase from Thiobacillus denitrificans (strain ATCC 25259 / T1).